Reading from the N-terminus, the 493-residue chain is Glutamyl-tRNA(Gln) amidotransferase subunit A (493 aa).

Active-site charge relay system residues include K81 and S156. S180 functions as the Acyl-ester intermediate in the catalytic mechanism.

It belongs to the amidase family. GatA subfamily. Heterotrimer of A, B and C subunits.

It carries out the reaction L-glutamyl-tRNA(Gln) + L-glutamine + ATP + H2O = L-glutaminyl-tRNA(Gln) + L-glutamate + ADP + phosphate + H(+). In terms of biological role, allows the formation of correctly charged Gln-tRNA(Gln) through the transamidation of misacylated Glu-tRNA(Gln) in organisms which lack glutaminyl-tRNA synthetase. The reaction takes place in the presence of glutamine and ATP through an activated gamma-phospho-Glu-tRNA(Gln). The sequence is that of Glutamyl-tRNA(Gln) amidotransferase subunit A from Mycobacterium ulcerans (strain Agy99).